We begin with the raw amino-acid sequence, 341 residues long: Cyclic GMP-AMP synthase-like receptor (341 aa).

ATP is bound by residues serine 64 and 77-79 (EFD). Residues glutamate 77, aspartate 79, and aspartate 172 each coordinate Mg(2+). Position 172 (aspartate 172) interacts with GTP. ATP contacts are provided by residues lysine 230 and 246-250 (SYHIK). Glutamate 258 is a binding site for Mn(2+).

It belongs to the mab-21 family. Mg(2+) is required as a cofactor. The cofactor is Mn(2+).

The enzyme catalyses GTP + ATP = 2',3'-cGAMP + 2 diphosphate. The catalysed reaction is GTP + ATP = pppGp(2'-5')A + diphosphate. It catalyses the reaction pppGp(2'-5')A = 2',3'-cGAMP + diphosphate. Its function is as follows. Nucleotidyltransferase that catalyzes the formation of cyclic GMP-AMP (2',3'-cGAMP) from ATP and GTP and plays a key role in innate immunity. Acts as a key sensor of double-stranded RNA (dsRNA), the presence of dsRNA in the cytoplasm being a danger signal that triggers the immune responses. Directly binds dsRNA, activating the nucleotidyltransferase activity, leading to synthesis of 2',3'-cGAMP, a second messenger that binds to and activates Sting, thereby triggering the immune response via activation of the NF-kappa-B transcription factor. This Hydra vulgaris (Hydra) protein is Cyclic GMP-AMP synthase-like receptor.